The primary structure comprises 644 residues: Cell pattern formation-associated protein StuA (644 aa).

Positions Ala18–His33 are enriched in low complexity. Disordered regions lie at residues Ala18–Pro58 and Gln86–Gly120. The span at Pro38–Gln47 shows a compositional bias: polar residues. Positions Leu87 to Ser104 are enriched in low complexity. Residues Arg124–Pro230 form the HTH APSES-type domain. A DNA-binding region (H-T-H motif) is located at residues Gly158 to Glu179. Residues Gly239–Arg644 are disordered. Residues Ser253–Pro269 show a composition bias toward polar residues. Positions Ser315 to Ser328 are enriched in low complexity. Composition is skewed to polar residues over residues Ala334–Val357, Gln371–Asn383, and Pro395–Ser404. The span at Glu456 to Tyr465 shows a compositional bias: basic and acidic residues. Positions Gly509–Gln524 are enriched in low complexity. Residues Trp525–Asn544 show a composition bias toward polar residues. The nuclear localization domain stretch occupies residues Lys584 to Lys612. Polar residues predominate over residues His635 to Arg644.

The protein belongs to the EFG1/PHD1/stuA family.

The protein resides in the nucleus. Its function is as follows. Transcription factor that regulates asexual reproduction. Binds the StuA-response elements (StRE) with the consensus sequence 5'-(A/T)CGCG(T/A)N(A/C)-3' at the promoters of target genes. Required for pathogenicity and positively regulates the synthesis of the mycotoxin alternariol. Acts as a positive regulator of Tox3 but is not required for the expression of ToxA. Also acts as a central regulator of carbon metabolism including glycolysis, the TCA cycle, and amino acid synthesis. The protein is Cell pattern formation-associated protein StuA of Phaeosphaeria nodorum (strain SN15 / ATCC MYA-4574 / FGSC 10173) (Glume blotch fungus).